The primary structure comprises 424 residues: MSANLLKESGPREVFCGLTSIVWLHRRMPDAFFLVVGSRTCAHLIQSAAGVMIFAEPRFGTAILSERDLAGLADAHDELDRVARELLMRRPEIRTLFLVGSCPSEVIKLDLARAAERLNEELQGRVRVVNYSGSGIETTFTQGEDGALAALVPLLPASESRQLLLVGTLADAVEDRLIHLFSKLGIESVRSLPPRQSSELPPVGSGTTVLLTQPFLTETARLLRDRGATVLKAPFPLGAEGSRRWMEAAAADFHCPEASVRAVLDPLEARARIALAPHREVLAGKRIFLLPESQLELPLARFLHRECGMDLVEVGVPYLNREQMAEELALLPDGTTVVEGQHVERQLDRVRAGHPDLVVCGMGLANPLEAEGITTKWSIELVFSPIHGIDQAGDLAELFSRPLHRRQLIHSALHPQASDHPVHA.

Cys-16, Cys-41, and Cys-102 together coordinate [4Fe-4S] cluster.

This sequence belongs to the BchN/ChlN family. In terms of assembly, protochlorophyllide reductase is composed of three subunits; ChlL, ChlN and ChlB. Forms a heterotetramer of two ChlB and two ChlN subunits. It depends on [4Fe-4S] cluster as a cofactor.

It catalyses the reaction chlorophyllide a + oxidized 2[4Fe-4S]-[ferredoxin] + 2 ADP + 2 phosphate = protochlorophyllide a + reduced 2[4Fe-4S]-[ferredoxin] + 2 ATP + 2 H2O. The protein operates within porphyrin-containing compound metabolism; chlorophyll biosynthesis (light-independent). Its function is as follows. Component of the dark-operative protochlorophyllide reductase (DPOR) that uses Mg-ATP and reduced ferredoxin to reduce ring D of protochlorophyllide (Pchlide) to form chlorophyllide a (Chlide). This reaction is light-independent. The NB-protein (ChlN-ChlB) is the catalytic component of the complex. The protein is Light-independent protochlorophyllide reductase subunit N of Synechococcus sp. (strain WH7803).